The primary structure comprises 311 residues: Serine hydrolase-like protein (311 aa).

The region spanning 27–227 (PPVLCLHGWL…FVSKEMFVHS (201 aa)) is the AB hydrolase-1 domain. Ser102 is an active-site residue. The residue at position 210 (Ser210) is a Phosphoserine.

Belongs to the AB hydrolase superfamily. Ubiquitous. High protein expression in skeletal and cardiac muscle.

The protein localises to the cytoplasm. The protein resides in the perinuclear region. It localises to the peroxisome. Probable serine hydrolase. May be related to cell muscle hypertrophy. This Mus musculus (Mouse) protein is Serine hydrolase-like protein (Serhl).